The following is a 492-amino-acid chain: Putative sucrose transport protein SUC6 (492 aa).

A disordered region spans residues 1 to 26 (MSDLQANKDAAAVNRQSSSSSADLNG). Topologically, residues 1–33 (MSDLQANKDAAAVNRQSSSSSADLNGPSPMRKM) are cytoplasmic. Positions 14–23 (NRQSSSSSAD) are enriched in polar residues. At S17 the chain carries Phosphoserine. Residues 34–54 (ISVASIAAGIQFGWALQLSLL) form a helical membrane-spanning segment. Residues 55-68 (TPYVQLLGVPHKWS) lie on the Extracellular side of the membrane. Residues 69–89 (SFIWLCGPVSGLLVQPSVGYF) traverse the membrane as a helical segment. At 90 to 101 (SDRCKSRFGRRR) the chain is on the cytoplasmic side. Residues 102–122 (PFIAMGALLVAVAVVLIGYAA) form a helical membrane-spanning segment. The Extracellular portion of the chain corresponds to 123 to 139 (DFGHSMGDKVDEPVKMR). A helical transmembrane segment spans residues 140-160 (AVVIFALGFWILDVANNTLQG). At 161–181 (PCRAFLGDLAAGDAKKTRTAN) the chain is on the cytoplasmic side. A helical membrane pass occupies residues 182–202 (AFFSFFMAVGNVLGYAAGSYT). Residues 203 to 224 (NLYKIFPFTMTKACDIYCANLK) lie on the Extracellular side of the membrane. The chain crosses the membrane as a helical span at residues 225-245 (SCFFLSITLLLVVTIIALWYV). Residues 246-277 (EDKQWSPKADSDNEKTPFFGEIFGAFKVMKRP) are Cytoplasmic-facing. The chain crosses the membrane as a helical span at residues 278-298 (MWMLLIVTALNWIAWFPFLLY). At 299–324 (DTDWMGREVYGGDSKGDDKMKKLYNQ) the chain is on the extracellular side. The chain crosses the membrane as a helical span at residues 325-345 (GIHVGGLGLMLNSIVLGFMSL). Residues 346-359 (GIEGISRKMGGAKR) are Cytoplasmic-facing. A helical membrane pass occupies residues 360-380 (LWGAVNIILAVCLAMTVLVTK). Residues 381 to 403 (KAEEHRRIAGPMALPTDGIRAGA) are Extracellular-facing. Residues 404–424 (LTLFALLGIPLAITFSIPFAL) form a helical membrane-spanning segment. Residues 425–446 (ASIISSSSGAGQGLSLGVLNMT) lie on the Cytoplasmic side of the membrane. Residues 447-467 (IVIPQMVVSFGVGPIDALFGG) form a helical membrane-spanning segment. Over 468–469 (GN) the chain is Extracellular. Residues 470–490 (LPGFVVGAIAAAISSVVAFSV) traverse the membrane as a helical segment. Residues 491–492 (LP) lie on the Cytoplasmic side of the membrane.

This sequence belongs to the glycoside-pentoside-hexuronide (GPH) cation symporter transporter (TC 2.A.2.4) family.

The protein localises to the cell membrane. It functions in the pathway glycan biosynthesis; sucrose metabolism. In terms of biological role, may be responsible for the transport of glucosides into the cell, with the concomitant uptake of protons (symport system). Does not seem to transport sucrose. The chain is Putative sucrose transport protein SUC6 from Arabidopsis thaliana (Mouse-ear cress).